The chain runs to 662 residues: Protein translocase subunit SecA 2 (662 aa).

ATP is bound by residues Q110, 128–132 (GEGKT), and D538.

It belongs to the SecA family. In terms of assembly, monomer and homodimer. Part of the essential Sec protein translocation apparatus which comprises SecA, SecYEG and auxiliary proteins SecDF. Other proteins may also be involved.

It localises to the cell inner membrane. The protein localises to the cytoplasm. It catalyses the reaction ATP + H2O + cellular proteinSide 1 = ADP + phosphate + cellular proteinSide 2.. Part of the Sec protein translocase complex. Interacts with the SecYEG preprotein conducting channel. Has a central role in coupling the hydrolysis of ATP to the transfer of proteins into and across the cell membrane, serving as an ATP-driven molecular motor driving the stepwise translocation of polypeptide chains across the membrane. In Chlorobium chlorochromatii (strain CaD3), this protein is Protein translocase subunit SecA 2.